The following is a 174-amino-acid chain: Pediocin PA-1 biosynthesis protein PedC (174 aa).

Its function is as follows. Probably involved in pediocin PA-1 biosynthesis. The chain is Pediocin PA-1 biosynthesis protein PedC (pedC) from Pediococcus acidilactici.